The sequence spans 226 residues: Lipoprotein-releasing system ATP-binding protein LolD (226 aa).

The ABC transporter domain occupies Ile-6 to Leu-226. Residue Ala-42–Ser-49 participates in ATP binding.

Belongs to the ABC transporter superfamily. Lipoprotein translocase (TC 3.A.1.125) family. The complex is composed of two ATP-binding proteins (LolD) and two transmembrane proteins (LolC and LolE).

The protein localises to the cell inner membrane. Part of the ABC transporter complex LolCDE involved in the translocation of mature outer membrane-directed lipoproteins, from the inner membrane to the periplasmic chaperone, LolA. Responsible for the formation of the LolA-lipoprotein complex in an ATP-dependent manner. The polypeptide is Lipoprotein-releasing system ATP-binding protein LolD (Mesorhizobium japonicum (strain LMG 29417 / CECT 9101 / MAFF 303099) (Mesorhizobium loti (strain MAFF 303099))).